The sequence spans 885 residues: Phycobiliprotein ApcE (885 aa).

Residue Cys185 coordinates (2R,3E)-phycocyanobilin. 3 consecutive PBS-linker domains span residues 242–422, 498–680, and 694–871; these read DVQG…FRKV, KSIG…NSKK, and NSIQ…KQSS.

The protein belongs to the phycobilisome linker protein family. In terms of processing, contains one covalently linked bilin chromophore. This protein autochromophorylates (Potential).

The protein localises to the plastid. Its subcellular location is the chloroplast thylakoid membrane. Functionally, this protein is postulated to act both as terminal energy acceptor and as a linker polypeptide that stabilizes the phycobilisome architecture. May have intrinsic bilin lyase activity. In Aglaothamnion neglectum (Red alga), this protein is Phycobiliprotein ApcE (apcE).